We begin with the raw amino-acid sequence, 199 residues long: Nucleoid occlusion factor SlmA (199 aa).

The region spanning 10 to 71 (RNRREEILQA…SLIEFIEDSL (62 aa)) is the HTH tetR-type domain. Positions 34-53 (TTAKLAANVGVSEAALYRHF) form a DNA-binding region, H-T-H motif. Positions 120–140 (NRLQGRINQLFERIEVQIRQV) form a coiled coil.

Belongs to the nucleoid occlusion factor SlmA family. In terms of assembly, homodimer. Interacts with FtsZ.

Its subcellular location is the cytoplasm. It localises to the nucleoid. In terms of biological role, required for nucleoid occlusion (NO) phenomenon, which prevents Z-ring formation and cell division over the nucleoid. Acts as a DNA-associated cell division inhibitor that binds simultaneously chromosomal DNA and FtsZ, and disrupts the assembly of FtsZ polymers. SlmA-DNA-binding sequences (SBS) are dispersed on non-Ter regions of the chromosome, preventing FtsZ polymerization at these regions. This Photorhabdus laumondii subsp. laumondii (strain DSM 15139 / CIP 105565 / TT01) (Photorhabdus luminescens subsp. laumondii) protein is Nucleoid occlusion factor SlmA.